Here is an 873-residue protein sequence, read N- to C-terminus: DNA mismatch repair protein MutS (873 aa).

Position 625–632 (625–632 (GPNMGGKS)) interacts with ATP.

The protein belongs to the DNA mismatch repair MutS family.

In terms of biological role, this protein is involved in the repair of mismatches in DNA. It is possible that it carries out the mismatch recognition step. This protein has a weak ATPase activity. The protein is DNA mismatch repair protein MutS of Xanthomonas oryzae pv. oryzae (strain KACC10331 / KXO85).